Consider the following 338-residue polypeptide: Phenylalanine--tRNA ligase alpha subunit (338 aa).

Mg(2+) is bound at residue Glu-253.

This sequence belongs to the class-II aminoacyl-tRNA synthetase family. Phe-tRNA synthetase alpha subunit type 1 subfamily. Tetramer of two alpha and two beta subunits. The cofactor is Mg(2+).

The protein resides in the cytoplasm. The catalysed reaction is tRNA(Phe) + L-phenylalanine + ATP = L-phenylalanyl-tRNA(Phe) + AMP + diphosphate + H(+). The chain is Phenylalanine--tRNA ligase alpha subunit from Geotalea daltonii (strain DSM 22248 / JCM 15807 / FRC-32) (Geobacter daltonii).